A 775-amino-acid polypeptide reads, in one-letter code: Rab3 GTPase-activating protein catalytic subunit (775 aa).

S173, S330, S373, S375, and S384 each carry phosphoserine. The segment at 324–351 (DEGKKTSPSDSMTKAYPADAGKAGGQLG) is disordered. Positions 386–414 (AEDLRGNGQESTKKGGPKDMAPLKPEGRL) are disordered. S458 bears the Phosphoserine mark.

It belongs to the Rab3-GAP catalytic subunit family. The Rab3 GTPase-activating complex is a heterodimer composed of Rab3gap1 and Rab3gap2. The Rab3 GTPase-activating complex interacts with DMXL2. Interacts with LMAN1.

Its subcellular location is the cytoplasm. It localises to the endoplasmic reticulum. It is found in the golgi apparatus. The protein resides in the cis-Golgi network. Functionally, catalytic subunit of the Rab3 GTPase-activating (Rab3GAP) complex composed of RAB3GAP1 and RAB3GAP2, which has GTPase-activating protein (GAP) activity towards various Rab3 subfamily members (RAB3A, RAB3B, RAB3C and RAB3D), RAB5A and RAB43, and guanine nucleotide exchange factor (GEF) activity towards RAB18. As part of the Rab3GAP complex, acts as a GAP for Rab3 proteins by converting active RAB3-GTP to the inactive form RAB3-GDP. Rab3 proteins are involved in regulated exocytosis of neurotransmitters and hormones. The Rab3GAP complex, acts as a GEF for RAB18 by promoting the conversion of inactive RAB18-GDP to the active form RAB18-GTP. Recruits and stabilizes RAB18 at the cis-Golgi membrane where RAB18 is most likely activated. Also involved in RAB18 recruitment at the endoplasmic reticulum (ER) membrane where it maintains proper ER structure. Required for normal eye and brain development. May participate in neurodevelopmental processes such as proliferation, migration and differentiation before synapse formation, and non-synaptic vesicular release of neurotransmitters. In Rattus norvegicus (Rat), this protein is Rab3 GTPase-activating protein catalytic subunit.